We begin with the raw amino-acid sequence, 293 residues long: MLRGTAAGGTLRLVGIEASKVVEEARRRHNLSKTATAALGRTMAASALLAVVLGKRTDSRVTVRVDGGGPVGWIVAEGSTDGRLRGYVRQPEADLPPRESDGKLDVRGIVGTDGELAVTRLLDNGEPYTGSVRLQSGEIAEDVSRYLGASEQIPNAVLLGVYEEGGRVANAGGLLIQAMPGVTDETLAKLEANIAAMGMLTDQLRNGGLLGAMQQAAAGLDLQLATDAQPAHFSCRCSREKAIDSLKFFGAEERQEMIDEGGQEVLCHWCSEKYHLTPEEIAALDEGEARAEA.

Cystine bridges form between cysteine 235/cysteine 237 and cysteine 267/cysteine 270.

Belongs to the HSP33 family. In terms of processing, under oxidizing conditions two disulfide bonds are formed involving the reactive cysteines. Under reducing conditions zinc is bound to the reactive cysteines and the protein is inactive.

It is found in the cytoplasm. Functionally, redox regulated molecular chaperone. Protects both thermally unfolding and oxidatively damaged proteins from irreversible aggregation. Plays an important role in the bacterial defense system toward oxidative stress. This chain is 33 kDa chaperonin, found in Deinococcus radiodurans (strain ATCC 13939 / DSM 20539 / JCM 16871 / CCUG 27074 / LMG 4051 / NBRC 15346 / NCIMB 9279 / VKM B-1422 / R1).